The following is a 58-amino-acid chain: UPF0391 membrane protein Sfri_4000 (58 aa).

The next 2 membrane-spanning stretches (helical) occupy residues 6–26 (LMFL…IAGA) and 27–47 (AAGI…ISLV).

Belongs to the UPF0391 family.

The protein localises to the cell membrane. The polypeptide is UPF0391 membrane protein Sfri_4000 (Shewanella frigidimarina (strain NCIMB 400)).